Reading from the N-terminus, the 240-residue chain is Pathogenesis-related thaumatin-like protein 3.5 (240 aa).

The signal sequence occupies residues 1-20 (MASLRLATLAMMVLFGSCRA). Cystine bridges form between Cys31/Cys237, Cys79/Cys89, Cys94/Cys100, Cys145/Cys227, Cys150/Cys210, Cys158/Cys173, Cys177/Cys186, and Cys187/Cys197.

This sequence belongs to the thaumatin family. As to expression, strongly expressed in pollen grains. Also present at weak levels in seedling roots, in sapling stems and in developing male strobili.

Its function is as follows. May be involved in disease resistance. This Cryptomeria japonica (Japanese cedar) protein is Pathogenesis-related thaumatin-like protein 3.5.